We begin with the raw amino-acid sequence, 188 residues long: Ribose 1,5-bisphosphate phosphokinase PhnN (188 aa).

Residue 9–16 (GPSGAGKD) coordinates ATP.

Belongs to the ribose 1,5-bisphosphokinase family.

It catalyses the reaction alpha-D-ribose 1,5-bisphosphate + ATP = 5-phospho-alpha-D-ribose 1-diphosphate + ADP. It functions in the pathway metabolic intermediate biosynthesis; 5-phospho-alpha-D-ribose 1-diphosphate biosynthesis; 5-phospho-alpha-D-ribose 1-diphosphate from D-ribose 5-phosphate (route II): step 3/3. Its function is as follows. Catalyzes the phosphorylation of ribose 1,5-bisphosphate to 5-phospho-D-ribosyl alpha-1-diphosphate (PRPP). In Pectobacterium parmentieri (strain WPP163) (Pectobacterium wasabiae (strain WPP163)), this protein is Ribose 1,5-bisphosphate phosphokinase PhnN.